The chain runs to 156 residues: Endoribonuclease YbeY (156 aa).

Zn(2+) contacts are provided by H122, H126, and H132.

Belongs to the endoribonuclease YbeY family. It depends on Zn(2+) as a cofactor.

It is found in the cytoplasm. Its function is as follows. Single strand-specific metallo-endoribonuclease involved in late-stage 70S ribosome quality control and in maturation of the 3' terminus of the 16S rRNA. This Bacillus cereus (strain ATCC 14579 / DSM 31 / CCUG 7414 / JCM 2152 / NBRC 15305 / NCIMB 9373 / NCTC 2599 / NRRL B-3711) protein is Endoribonuclease YbeY.